Reading from the N-terminus, the 216-residue chain is Uracil phosphoribosyltransferase (216 aa).

Residue 30–34 participates in GTP binding; it reads KTLVR. Residues Arg-80, Arg-105, and 140-148 contribute to the 5-phospho-alpha-D-ribose 1-diphosphate site; that span reads DPMIATAST. Uracil contacts are provided by residues Ile-203 and 208–210; that span reads GDA. Asp-209 is a binding site for 5-phospho-alpha-D-ribose 1-diphosphate.

This sequence belongs to the UPRTase family. It depends on Mg(2+) as a cofactor.

It carries out the reaction UMP + diphosphate = 5-phospho-alpha-D-ribose 1-diphosphate + uracil. It functions in the pathway pyrimidine metabolism; UMP biosynthesis via salvage pathway; UMP from uracil: step 1/1. With respect to regulation, allosterically activated by GTP. Catalyzes the conversion of uracil and 5-phospho-alpha-D-ribose 1-diphosphate (PRPP) to UMP and diphosphate. The chain is Uracil phosphoribosyltransferase from Sulfurisphaera tokodaii (strain DSM 16993 / JCM 10545 / NBRC 100140 / 7) (Sulfolobus tokodaii).